The sequence spans 426 residues: Protein arginine methyltransferase NDUFAF7 homolog, mitochondrial (426 aa).

It belongs to the NDUFAF7 family.

The protein resides in the mitochondrion. The catalysed reaction is L-arginyl-[protein] + 2 S-adenosyl-L-methionine = N(omega),N(omega)'-dimethyl-L-arginyl-[protein] + 2 S-adenosyl-L-homocysteine + 2 H(+). Its function is as follows. Arginine methyltransferase involved in the assembly or stability of mitochondrial NADH:ubiquinone oxidoreductase complex (complex I). The chain is Protein arginine methyltransferase NDUFAF7 homolog, mitochondrial from Caenorhabditis elegans.